We begin with the raw amino-acid sequence, 32 residues long: Cyclotide glopa B (32 aa).

The segment at residues 1-32 (GGSVPCIETCVWTGCFLVPGCSCKSDKKCYLN) is a cross-link (cyclopeptide (Gly-Asn)). 3 disulfide bridges follow: C6–C21, C10–C23, and C15–C29.

This is a cyclic peptide.

In terms of biological role, probably participates in a plant defense mechanism. In Gloeospermum pauciflorum, this protein is Cyclotide glopa B.